The chain runs to 149 residues: Extracellular protease inhibitor 1 (149 aa).

An N-terminal signal peptide occupies residues 1 to 16 (MKSALLFTLVVAAVHA). Kazal-like domains are found at residues 29-86 (ESNE…SSTG) and 88-141 (QPPS…ACVG). 2 disulfide bridges follow: cysteine 35-cysteine 65 and cysteine 39-cysteine 58. Residue asparagine 67 is glycosylated (N-linked (GlcNAc...) asparagine). Cystine bridges form between cysteine 94–cysteine 124, cysteine 98–cysteine 117, and cysteine 106–cysteine 139.

In terms of assembly, interacts with host subtilisin-like protease P69B.

The protein resides in the secreted. Secreted effector that interacts with and inhibits the pathogenesis-related P69B subtilisin-like serine protease of host tomato. Inhibition of host proteases by a pathogen extracellular protease inhibitor forms a specific type of defense-counterdefense mechanism between plants and microbial pathogens. The chain is Extracellular protease inhibitor 1 from Phytophthora infestans (Potato late blight agent).